Reading from the N-terminus, the 230-residue chain is Fibrillarin-like rRNA/tRNA 2'-O-methyltransferase (230 aa).

Residues T87–T88, E105–F106, D130–A131, and D150–Q153 each bind S-adenosyl-L-methionine.

This sequence belongs to the methyltransferase superfamily. Fibrillarin family. As to quaternary structure, interacts with nop5. Component of box C/D small ribonucleoprotein (sRNP) particles that contain rpl7ae, FlpA and nop5, plus a guide RNA.

Involved in pre-rRNA and tRNA processing. Utilizes the methyl donor S-adenosyl-L-methionine to catalyze the site-specific 2'-hydroxyl methylation of ribose moieties in rRNA and tRNA. Site specificity is provided by a guide RNA that base pairs with the substrate. Methylation occurs at a characteristic distance from the sequence involved in base pairing with the guide RNA. This Methanococcus vannielii (strain ATCC 35089 / DSM 1224 / JCM 13029 / OCM 148 / SB) protein is Fibrillarin-like rRNA/tRNA 2'-O-methyltransferase.